The following is a 443-amino-acid chain: Glutamate--tRNA ligase 1 (443 aa).

The short motif at 10-20 (PSPTGYIHVGN) is the 'HIGH' region element. The 'KMSKS' region motif lies at 241 to 245 (ALSKR). K244 contributes to the ATP binding site.

The protein belongs to the class-I aminoacyl-tRNA synthetase family. Glutamate--tRNA ligase type 1 subfamily. In terms of assembly, monomer.

It is found in the cytoplasm. The enzyme catalyses tRNA(Glu) + L-glutamate + ATP = L-glutamyl-tRNA(Glu) + AMP + diphosphate. Catalyzes the attachment of glutamate to tRNA(Glu) in a two-step reaction: glutamate is first activated by ATP to form Glu-AMP and then transferred to the acceptor end of tRNA(Glu). This chain is Glutamate--tRNA ligase 1, found in Ruegeria pomeroyi (strain ATCC 700808 / DSM 15171 / DSS-3) (Silicibacter pomeroyi).